The chain runs to 251 residues: Imidazole glycerol phosphate synthase subunit HisF (251 aa).

Catalysis depends on residues Asp11 and Asp130.

Belongs to the HisA/HisF family. As to quaternary structure, heterodimer of HisH and HisF.

Its subcellular location is the cytoplasm. It carries out the reaction 5-[(5-phospho-1-deoxy-D-ribulos-1-ylimino)methylamino]-1-(5-phospho-beta-D-ribosyl)imidazole-4-carboxamide + L-glutamine = D-erythro-1-(imidazol-4-yl)glycerol 3-phosphate + 5-amino-1-(5-phospho-beta-D-ribosyl)imidazole-4-carboxamide + L-glutamate + H(+). The protein operates within amino-acid biosynthesis; L-histidine biosynthesis; L-histidine from 5-phospho-alpha-D-ribose 1-diphosphate: step 5/9. Its function is as follows. IGPS catalyzes the conversion of PRFAR and glutamine to IGP, AICAR and glutamate. The HisF subunit catalyzes the cyclization activity that produces IGP and AICAR from PRFAR using the ammonia provided by the HisH subunit. The protein is Imidazole glycerol phosphate synthase subunit HisF of Chlorobium phaeobacteroides (strain BS1).